The following is a 386-amino-acid chain: 3-ketoacyl-CoA thiolase (386 aa).

Cysteine 91 serves as the catalytic Acyl-thioester intermediate. Active-site proton acceptor residues include histidine 342 and cysteine 372.

Belongs to the thiolase-like superfamily. Thiolase family. Heterotetramer of two alpha chains (FadB) and two beta chains (FadA).

The protein localises to the cytoplasm. It carries out the reaction an acyl-CoA + acetyl-CoA = a 3-oxoacyl-CoA + CoA. The protein operates within lipid metabolism; fatty acid beta-oxidation. Functionally, catalyzes the final step of fatty acid oxidation in which acetyl-CoA is released and the CoA ester of a fatty acid two carbons shorter is formed. In Colwellia psychrerythraea (strain 34H / ATCC BAA-681) (Vibrio psychroerythus), this protein is 3-ketoacyl-CoA thiolase.